The primary structure comprises 317 residues: L-lactate dehydrogenase (317 aa).

Residues V16, D37, and Y69 each contribute to the NAD(+) site. Substrate is bound by residues Q86, R92, and 124–127; that span reads NPVD. NAD(+)-binding positions include 122–124 and S147; that span reads ASN. Residue 152-155 participates in substrate binding; the sequence is DSAR. H179 serves as the catalytic Proton acceptor. Y223 carries the phosphotyrosine modification. Residue T232 participates in substrate binding.

The protein belongs to the LDH/MDH superfamily. LDH family. In terms of assembly, homotetramer.

Its subcellular location is the cytoplasm. The catalysed reaction is (S)-lactate + NAD(+) = pyruvate + NADH + H(+). It participates in fermentation; pyruvate fermentation to lactate; (S)-lactate from pyruvate: step 1/1. Functionally, catalyzes the conversion of lactate to pyruvate. The chain is L-lactate dehydrogenase from Mycoplasma capricolum subsp. capricolum (strain California kid / ATCC 27343 / NCTC 10154).